A 412-amino-acid chain; its full sequence is Multifunctional CCA protein (412 aa).

Residues glycine 8 and arginine 11 each contribute to the ATP site. Residues glycine 8 and arginine 11 each coordinate CTP. 2 residues coordinate Mg(2+): aspartate 21 and aspartate 23. Residues arginine 91, arginine 137, and arginine 140 each coordinate ATP. CTP is bound by residues arginine 91, arginine 137, and arginine 140. One can recognise an HD domain in the interval 225–326 (TGIHVMMVID…ADMLQATDAY (102 aa)).

The protein belongs to the tRNA nucleotidyltransferase/poly(A) polymerase family. Bacterial CCA-adding enzyme type 1 subfamily. In terms of assembly, monomer. Can also form homodimers and oligomers. It depends on Mg(2+) as a cofactor. Ni(2+) is required as a cofactor.

The enzyme catalyses a tRNA precursor + 2 CTP + ATP = a tRNA with a 3' CCA end + 3 diphosphate. The catalysed reaction is a tRNA with a 3' CCA end + 2 CTP + ATP = a tRNA with a 3' CCACCA end + 3 diphosphate. Catalyzes the addition and repair of the essential 3'-terminal CCA sequence in tRNAs without using a nucleic acid template. Adds these three nucleotides in the order of C, C, and A to the tRNA nucleotide-73, using CTP and ATP as substrates and producing inorganic pyrophosphate. tRNA 3'-terminal CCA addition is required both for tRNA processing and repair. Also involved in tRNA surveillance by mediating tandem CCA addition to generate a CCACCA at the 3' terminus of unstable tRNAs. While stable tRNAs receive only 3'-terminal CCA, unstable tRNAs are marked with CCACCA and rapidly degraded. The polypeptide is Multifunctional CCA protein (Nitrosomonas europaea (strain ATCC 19718 / CIP 103999 / KCTC 2705 / NBRC 14298)).